Here is a 531-residue protein sequence, read N- to C-terminus: Serine-type carboxypeptidase F (531 aa).

Positions 1–25 (MLFRSLLSTAVLAVSLCTDNASAAK) are cleaved as a signal peptide. Asn-20 carries an N-linked (GlcNAc...) asparagine glycan. Residues 26-52 (HGRFGQKARDAMNIAKRSANAVKHSLK) constitute a propeptide that is removed on maturation. Asn-63, Asn-94, and Asn-155 each carry an N-linked (GlcNAc...) asparagine glycan. Ser-211 is a catalytic residue. 4 N-linked (GlcNAc...) asparagine glycosylation sites follow: Asn-228, Asn-271, Asn-309, and Asn-378. The active site involves Asp-430. N-linked (GlcNAc...) asparagine glycans are attached at residues Asn-436 and Asn-444. His-507 is a catalytic residue.

The protein belongs to the peptidase S10 family. Monomer.

Its activity is regulated as follows. Inhibited by DFP, and Hg(Cl)2. Functionally, removes any amino acid from the C-terminus of a long peptide. Digests preferentially peptides containing a positively charged residue in P1' position, as well as arginine, lysine or phenylalanine in P1 position of ester substrate. Also catalyzes peptide synthesis. The polypeptide is Serine-type carboxypeptidase F (pepF) (Aspergillus niger).